The sequence spans 87 residues: ParB-like nuclease domain-containing protein YnaK (87 aa).

The chain is ParB-like nuclease domain-containing protein YnaK (ynaK) from Escherichia coli (strain K12).